A 326-amino-acid chain; its full sequence is Alkanal monooxygenase beta chain (326 aa).

Belongs to the bacterial luciferase oxidoreductase family. As to quaternary structure, heterodimer of an alpha and a beta chain.

The catalysed reaction is a long-chain fatty aldehyde + FMNH2 + O2 = a long-chain fatty acid + hnu + FMN + H2O + 2 H(+). In terms of biological role, light-emitting reaction in luminous bacteria. The specific role of the beta subunit is unknown, but it is absolutely required for bioluminescence activity. This Photobacterium leiognathi protein is Alkanal monooxygenase beta chain (luxB).